Consider the following 183-residue polypeptide: Hypoxanthine/guanine phosphoribosyltransferase (183 aa).

The protein belongs to the purine/pyrimidine phosphoribosyltransferase family. Archaeal HPRT subfamily. In terms of assembly, homodimer.

It localises to the cytoplasm. It catalyses the reaction IMP + diphosphate = hypoxanthine + 5-phospho-alpha-D-ribose 1-diphosphate. The catalysed reaction is GMP + diphosphate = guanine + 5-phospho-alpha-D-ribose 1-diphosphate. It functions in the pathway purine metabolism; IMP biosynthesis via salvage pathway; IMP from hypoxanthine: step 1/1. Functionally, catalyzes a salvage reaction resulting in the formation of IMP that is energically less costly than de novo synthesis. The chain is Hypoxanthine/guanine phosphoribosyltransferase from Methanothermococcus okinawensis (strain DSM 14208 / JCM 11175 / IH1).